The sequence spans 374 residues: P2Y purinoceptor 2 (374 aa).

The Extracellular segment spans residues Met-1–Lys-32. Asn-9 and Asn-13 each carry an N-linked (GlcNAc...) asparagine glycan. The helical transmembrane segment at Tyr-33–Leu-59 threads the bilayer. Topologically, residues Cys-60–Thr-70 are cytoplasmic. A helical transmembrane segment spans residues Tyr-71–Tyr-93. At Ala-94–Arg-110 the chain is on the extracellular side. A disulfide bond links Cys-106 and Cys-183. A helical membrane pass occupies residues Phe-111 to Val-129. The Cytoplasmic segment spans residues His-130 to Arg-152. A helical membrane pass occupies residues Val-153–Val-172. Residues Thr-173–His-194 lie on the Extracellular side of the membrane. The chain crosses the membrane as a helical span at residues Phe-195–Leu-220. Over Met-221–Thr-245 the chain is Cytoplasmic. A helical membrane pass occupies residues Ile-246 to Tyr-268. At Ser-269–Ala-286 the chain is on the extracellular side. A helical membrane pass occupies residues Tyr-287–Ala-308. Residues Gly-309–Leu-374 lie on the Cytoplasmic side of the membrane. A disordered region spans residues Asp-318–Leu-374. A compositionally biased stretch (basic residues) spans Ala-331 to Pro-340. Residues Asn-341–Glu-361 are compositionally biased toward basic and acidic residues.

Belongs to the G-protein coupled receptor 1 family.

It localises to the cell membrane. Receptor for ATP and UTP coupled to G-proteins that activate a phosphatidylinositol-calcium second messenger system. The affinity range is UTP = ATP &gt; ATP-gamma-S &gt;&gt; 2-methylthio-ATP = ADP. The polypeptide is P2Y purinoceptor 2 (P2ry2) (Rattus norvegicus (Rat)).